Reading from the N-terminus, the 371-residue chain is MGNKTALYDIHQSMGGKIVDFGGWDMPLHYGSQIDEHHKVRQHAGMFDVSHMTVVDVTGSDAKAYLQYLLANDVAKLDNLVGKALYSGMLNEQGGVIDDLIVYNMGDWYRVVVNCSTREKDLAWMSQVANNYQVKLQERADLAMIAVQGPQAIAITKTLVSAEAATLIDNLQVFQGLASTQQGSDWFFGRTGYTGEDGLEIMLPNEQAGTFWQALAAAGVAPCGLGARDTLRLEAGMNLYGHEMDENISPLAANMGWTIAWQPEARNFIGRAALTAEKSAGQRHKLVGLVLRERGVLRAEQLVHIANSDERGVITSGTFSPSLGYSIALARVPVTQVPLTPGAQCQVEMRGKLVTVDVVAPGFVRQGKALV.

The protein belongs to the GcvT family. As to quaternary structure, the glycine cleavage system is composed of four proteins: P, T, L and H.

It catalyses the reaction N(6)-[(R)-S(8)-aminomethyldihydrolipoyl]-L-lysyl-[protein] + (6S)-5,6,7,8-tetrahydrofolate = N(6)-[(R)-dihydrolipoyl]-L-lysyl-[protein] + (6R)-5,10-methylene-5,6,7,8-tetrahydrofolate + NH4(+). Functionally, the glycine cleavage system catalyzes the degradation of glycine. The polypeptide is Aminomethyltransferase (Cellvibrio japonicus (strain Ueda107) (Pseudomonas fluorescens subsp. cellulosa)).